The sequence spans 137 residues: UPF0275 protein PM0489 (137 aa).

This sequence belongs to the UPF0275 family.

The chain is UPF0275 protein PM0489 from Pasteurella multocida (strain Pm70).